Consider the following 37-residue polypeptide: Mu-thomitoxin-Hme1a (37 aa).

3 disulfides stabilise this stretch: Cys-2–Cys-18, Cys-9–Cys-22, and Cys-17–Cys-33. Position 37 is a phenylalanine amide (Phe-37).

It belongs to the neurotoxin 01 (U2-agtx) family. In terms of processing, contains 3 disulfide bonds. Expressed by the venom gland.

It is found in the secreted. Functionally, blocks the Nav1.2/SCN2A, Nav1.4/SCN4A, and Nav1.6/SCN8A sodium channels. Reduces the peak amplitude of the sodium current and negatively shifts the steady-state inactivation process. Does not shift the threshold potential of activation or the voltage corresponding to maximal current. Does not change the reversal potential of the sodium current. May act on site 1 of the receptor. This Heriaeus mellotteei (Crab spider) protein is Mu-thomitoxin-Hme1a.